The sequence spans 188 residues: Segregation and condensation protein B (188 aa).

It belongs to the ScpB family. Homodimer. Homodimerization may be required to stabilize the binding of ScpA to the Smc head domains. Component of a cohesin-like complex composed of ScpA, ScpB and the Smc homodimer, in which ScpA and ScpB bind to the head domain of Smc. The presence of the three proteins is required for the association of the complex with DNA.

The protein resides in the cytoplasm. Participates in chromosomal partition during cell division. May act via the formation of a condensin-like complex containing Smc and ScpA that pull DNA away from mid-cell into both cell halves. The sequence is that of Segregation and condensation protein B from Streptococcus gordonii (strain Challis / ATCC 35105 / BCRC 15272 / CH1 / DL1 / V288).